We begin with the raw amino-acid sequence, 542 residues long: Chaperonin GroEL (542 aa).

Residues 29–32 (TLGP), lysine 50, 86–90 (DGTTT), glycine 414, and aspartate 494 each bind ATP.

This sequence belongs to the chaperonin (HSP60) family. As to quaternary structure, forms a cylinder of 14 subunits composed of two heptameric rings stacked back-to-back. Interacts with the co-chaperonin GroES.

It is found in the cytoplasm. The enzyme catalyses ATP + H2O + a folded polypeptide = ADP + phosphate + an unfolded polypeptide.. In terms of biological role, together with its co-chaperonin GroES, plays an essential role in assisting protein folding. The GroEL-GroES system forms a nano-cage that allows encapsulation of the non-native substrate proteins and provides a physical environment optimized to promote and accelerate protein folding. This is Chaperonin GroEL from Cytophaga hutchinsonii (strain ATCC 33406 / DSM 1761 / CIP 103989 / NBRC 15051 / NCIMB 9469 / D465).